A 455-amino-acid polypeptide reads, in one-letter code: UDP-glycosyltransferase 2 (455 aa).

The protein belongs to the UDP-glycosyltransferase family.

The enzyme catalyses exophillate + UDP-alpha-D-galactose = phaeomoniecin D + UDP + H(+). Its pathway is secondary metabolite biosynthesis. In terms of biological role, catalyzes the second glycosylation step during phaeomoniecin D biosynthesis, the further O-galactosylation of exophillic acid (produced by the O-glycosyltransferase OGT1) to yield the 4-O-beta-D-galactoside phaeomoniecin D. This is UDP-glycosyltransferase 2 from Phaeomoniella chlamydospora (Phaeoacremonium chlamydosporum).